The sequence spans 286 residues: 2,3,4,5-tetrahydropyridine-2,6-dicarboxylate N-succinyltransferase (286 aa).

Residues R111 and D148 each coordinate substrate.

The protein belongs to the transferase hexapeptide repeat family. Homotrimer.

The protein resides in the cytoplasm. The enzyme catalyses (S)-2,3,4,5-tetrahydrodipicolinate + succinyl-CoA + H2O = (S)-2-succinylamino-6-oxoheptanedioate + CoA. It functions in the pathway amino-acid biosynthesis; L-lysine biosynthesis via DAP pathway; LL-2,6-diaminopimelate from (S)-tetrahydrodipicolinate (succinylase route): step 1/3. This chain is 2,3,4,5-tetrahydropyridine-2,6-dicarboxylate N-succinyltransferase, found in Rhizobium etli (strain ATCC 51251 / DSM 11541 / JCM 21823 / NBRC 15573 / CFN 42).